Here is a 409-residue protein sequence, read N- to C-terminus: Inner membrane transport protein YqeG (409 aa).

At 1 to 25 (MSNIWSKEETLWSFALYGTAVGAGT) the chain is on the periplasmic side. A helical membrane pass occupies residues 26–46 (LFLPIQLGSAGAVVLFITALV). Residues 47-87 (AWPLTYWPHKALCQFILSSKTSAGEGITGAVTHYYGKKIGN) are Cytoplasmic-facing. The helical transmembrane segment at 88–108 (LITTLYFIAFFVVVLIYAVAI) threads the bilayer. At 109–127 (TNSLTEQLAKHMVIDLRIR) the chain is on the periplasmic side. Residues 128–148 (MLVSLGVVLILNLIFLMGRHA) form a helical membrane-spanning segment. Residues 149-151 (TIR) are Cytoplasmic-facing. Residues 152–172 (VMGFLVFPLIAYFLFLSIYLV) form a helical membrane-spanning segment. Residues 173-193 (GSWQPDLLTTQVEFNQNTLHQ) are Periplasmic-facing. A helical membrane pass occupies residues 194–214 (IWISIPVMVFAFSHTPIISTF). At 215–235 (AIDRREKYGEHAMDKCKKIMK) the chain is on the cytoplasmic side. A helical transmembrane segment spans residues 236 to 256 (VAYLIICISVLFFVFSCLLSI). The Periplasmic segment spans residues 257-276 (PPSYIEAAKEEGVTILSALS). The chain crosses the membrane as a helical span at residues 277–297 (MLPNAPAWLSISGIIVAVVAM). The Cytoplasmic segment spans residues 298–329 (SKSFLGTYFGVIEGATEVVKTTLQQVGVKKSR). Residues 330–350 (AFNRALSIMLVSLITFIVCCI) traverse the membrane as a helical segment. Residues 351–353 (NPN) are Periplasmic-facing. A helical membrane pass occupies residues 354-374 (AISMIYAISGPLIAMILFIMP). Residues 375–388 (TLSTYLIPALKPWR) are Cytoplasmic-facing. Residues 389–409 (SIGNLITLIVGILCVSVMFFS) form a helical membrane-spanning segment.

Belongs to the amino acid/polyamine transporter 2 family. SdaC/TdcC subfamily.

The protein localises to the cell inner membrane. This chain is Inner membrane transport protein YqeG (yqeG), found in Escherichia coli O6:H1 (strain CFT073 / ATCC 700928 / UPEC).